Consider the following 428-residue polypeptide: Maltoporin (428 aa).

An N-terminal signal peptide occupies residues 1–21 (MKKTLLAVAIGGAMFATSAAA).

This sequence belongs to the porin LamB (TC 1.B.3) family. In terms of assembly, homotrimer formed of three 18-stranded antiparallel beta-barrels, containing three independent channels.

The protein localises to the cell outer membrane. The catalysed reaction is beta-maltose(in) = beta-maltose(out). Functionally, involved in the transport of maltose and maltodextrins. The sequence is that of Maltoporin from Mannheimia succiniciproducens (strain KCTC 0769BP / MBEL55E).